Consider the following 314-residue polypeptide: Formimidoylglutamase (314 aa).

Mn(2+)-binding residues include His-127, Asp-153, His-155, Asp-157, Asp-245, and Asp-247.

This sequence belongs to the arginase family. It depends on Mn(2+) as a cofactor.

It carries out the reaction N-formimidoyl-L-glutamate + H2O = formamide + L-glutamate. It participates in amino-acid degradation; L-histidine degradation into L-glutamate; L-glutamate from N-formimidoyl-L-glutamate (hydrolase route): step 1/1. Catalyzes the conversion of N-formimidoyl-L-glutamate to L-glutamate and formamide. This chain is Formimidoylglutamase, found in Aeromonas hydrophila subsp. hydrophila (strain ATCC 7966 / DSM 30187 / BCRC 13018 / CCUG 14551 / JCM 1027 / KCTC 2358 / NCIMB 9240 / NCTC 8049).